Here is a 238-residue protein sequence, read N- to C-terminus: Pyridoxine 5'-phosphate synthase (238 aa).

Asn6 is a binding site for 3-amino-2-oxopropyl phosphate. 8-9 (DH) provides a ligand contact to 1-deoxy-D-xylulose 5-phosphate. Arg17 lines the 3-amino-2-oxopropyl phosphate pocket. The Proton acceptor role is filled by His42. 1-deoxy-D-xylulose 5-phosphate-binding residues include Arg44 and His49. The active-site Proton acceptor is the Glu69. Thr99 provides a ligand contact to 1-deoxy-D-xylulose 5-phosphate. The active-site Proton donor is His186. 3-amino-2-oxopropyl phosphate-binding positions include Gly187 and 208-209 (GH).

Belongs to the PNP synthase family. In terms of assembly, homooctamer; tetramer of dimers.

Its subcellular location is the cytoplasm. The catalysed reaction is 3-amino-2-oxopropyl phosphate + 1-deoxy-D-xylulose 5-phosphate = pyridoxine 5'-phosphate + phosphate + 2 H2O + H(+). Its pathway is cofactor biosynthesis; pyridoxine 5'-phosphate biosynthesis; pyridoxine 5'-phosphate from D-erythrose 4-phosphate: step 5/5. In terms of biological role, catalyzes the complicated ring closure reaction between the two acyclic compounds 1-deoxy-D-xylulose-5-phosphate (DXP) and 3-amino-2-oxopropyl phosphate (1-amino-acetone-3-phosphate or AAP) to form pyridoxine 5'-phosphate (PNP) and inorganic phosphate. The polypeptide is Pyridoxine 5'-phosphate synthase (Anaplasma marginale (strain St. Maries)).